Reading from the N-terminus, the 293-residue chain is Elongation factor Ts (293 aa).

The interval Thr79 to Val82 is involved in Mg(2+) ion dislocation from EF-Tu.

This sequence belongs to the EF-Ts family.

The protein resides in the cytoplasm. Functionally, associates with the EF-Tu.GDP complex and induces the exchange of GDP to GTP. It remains bound to the aminoacyl-tRNA.EF-Tu.GTP complex up to the GTP hydrolysis stage on the ribosome. The polypeptide is Elongation factor Ts (Bacillus licheniformis (strain ATCC 14580 / DSM 13 / JCM 2505 / CCUG 7422 / NBRC 12200 / NCIMB 9375 / NCTC 10341 / NRRL NRS-1264 / Gibson 46)).